Here is a 787-residue protein sequence, read N- to C-terminus: Phenylalanine--tRNA ligase beta subunit (787 aa).

The tRNA-binding domain maps to 38-151; sequence GQDPAPFVVA…SDYEVGDSFF (114 aa). The B5 domain occupies 397–474; it reads SEGRVISFNP…RMHGYDKVQE (78 aa). Asp-452, Asp-458, Glu-461, and Glu-462 together coordinate Mg(2+). Residues 694 to 785 enclose the FDX-ACB domain; sequence HKYQPVKRDF…VAQKLGGELR (92 aa).

Belongs to the phenylalanyl-tRNA synthetase beta subunit family. Type 1 subfamily. In terms of assembly, tetramer of two alpha and two beta subunits. Mg(2+) is required as a cofactor.

The protein localises to the cytoplasm. It carries out the reaction tRNA(Phe) + L-phenylalanine + ATP = L-phenylalanyl-tRNA(Phe) + AMP + diphosphate + H(+). The protein is Phenylalanine--tRNA ligase beta subunit of Anaplasma marginale (strain St. Maries).